The chain runs to 172 residues: Adenine phosphoribosyltransferase (172 aa).

It belongs to the purine/pyrimidine phosphoribosyltransferase family. In terms of assembly, homodimer.

It localises to the cytoplasm. It carries out the reaction AMP + diphosphate = 5-phospho-alpha-D-ribose 1-diphosphate + adenine. Its pathway is purine metabolism; AMP biosynthesis via salvage pathway; AMP from adenine: step 1/1. Functionally, catalyzes a salvage reaction resulting in the formation of AMP, that is energically less costly than de novo synthesis. This Prochlorococcus marinus (strain MIT 9211) protein is Adenine phosphoribosyltransferase.